The chain runs to 209 residues: Large ribosomal subunit protein uL3 (209 aa).

The segment at 126 to 165 (HNFGGGSRTHGQSDRLRAPGSVGGSSDPSRTFRGTRMAGR) is disordered.

The protein belongs to the universal ribosomal protein uL3 family. Part of the 50S ribosomal subunit. Forms a cluster with proteins L14 and L19.

One of the primary rRNA binding proteins, it binds directly near the 3'-end of the 23S rRNA, where it nucleates assembly of the 50S subunit. This Chlorobium limicola (strain DSM 245 / NBRC 103803 / 6330) protein is Large ribosomal subunit protein uL3.